A 52-amino-acid polypeptide reads, in one-letter code: Large ribosomal subunit protein bL33A (52 aa).

The protein belongs to the bacterial ribosomal protein bL33 family.

The polypeptide is Large ribosomal subunit protein bL33A (Staphylococcus aureus (strain USA300)).